Here is a 97-residue protein sequence, read N- to C-terminus: MTKYEILYIIRPNIDEEAKAALVERFDGILTDNGAANLESKDWEKRKLAYEINDFREGIYHIATFEAETTSEALSEFDRLAKINLDILRHMIVKVEA.

The protein belongs to the bacterial ribosomal protein bS6 family.

In terms of biological role, binds together with bS18 to 16S ribosomal RNA. The sequence is that of Small ribosomal subunit protein bS6 (rpsF) from Lactococcus lactis subsp. lactis (strain IL1403) (Streptococcus lactis).